Reading from the N-terminus, the 185-residue chain is Keratin-associated protein 4-8 (185 aa).

25 consecutive repeat copies span residues Gly-14–Asp-18, Leu-19–Thr-23, Cys-24–Ser-28, Cys-39–Ser-43, Tyr-44–Cys-48, Cys-49–Gln-53, Cys-54–Val-58, Cys-59–Thr-63, Cys-64–Ser-68, Cys-69–Ser-73, Cys-74–Gln-78, Cys-79–Val-83, Cys-84–Thr-88, Cys-89–Ser-93, Cys-94–Ser-98, Cys-99–Ser-103, Cys-104–Ser-108, Cys-109–Gln-113, Cys-114–Val-118, Cys-119–Asn-123, Cys-124–Ser-128, Cys-134–Ser-138, Cys-139–Ser-143, Cys-144–Cys-148, and Cys-149–Cys-164. The 25 X 5 AA repeats of C-C-[IKRQVHEC]-[SPRT]-[STCVQPR] stretch occupies residues Gly-14–Cys-164.

The protein belongs to the KRTAP type 4 family. In terms of assembly, interacts with hair keratins. Expressed in the hair follicles.

Functionally, in the hair cortex, hair keratin intermediate filaments are embedded in an interfilamentous matrix, consisting of hair keratin-associated proteins (KRTAP), which are essential for the formation of a rigid and resistant hair shaft through their extensive disulfide bond cross-linking with abundant cysteine residues of hair keratins. The matrix proteins include the high-sulfur and high-glycine-tyrosine keratins. The polypeptide is Keratin-associated protein 4-8 (KRTAP4-8) (Homo sapiens (Human)).